A 237-amino-acid polypeptide reads, in one-letter code: Ribitol-5-phosphate cytidylyltransferase (237 aa).

Residues 7–10 (LAGG) and 80–86 (GEDRNET) each bind CTP.

The protein belongs to the IspD/TarI cytidylyltransferase family. TarI subfamily.

It catalyses the reaction D-ribitol 5-phosphate + CTP + H(+) = CDP-L-ribitol + diphosphate. It participates in cell wall biogenesis; poly(ribitol phosphate) teichoic acid biosynthesis. Functionally, catalyzes the transfer of the cytidylyl group of CTP to D-ribitol 5-phosphate. In Listeria monocytogenes serotype 4b (strain F2365), this protein is Ribitol-5-phosphate cytidylyltransferase.